The sequence spans 207 residues: Putative 3-methyladenine DNA glycosylase (207 aa).

It belongs to the DNA glycosylase MPG family.

The chain is Putative 3-methyladenine DNA glycosylase from Burkholderia lata (strain ATCC 17760 / DSM 23089 / LMG 22485 / NCIMB 9086 / R18194 / 383).